The following is a 510-amino-acid chain: NAD(P)H-quinone oxidoreductase subunit 2 B, chloroplastic (510 aa).

The next 13 helical transmembrane spans lie at 24–44 (LLLF…GLIL), 57–77 (IPWF…ALLF), 99–119 (IFQF…VEYI), 124–144 (MAIT…MFLC), 149–169 (LITI…LSGY), 183–203 (YLLM…WLYG), 227–247 (PGIL…LSLA), 295–315 (WHLL…LIAI), 323–343 (MLAY…IVGD), 354–374 (YMLF…LFGL), 395–415 (ALSL…AGFF), 428–448 (GLYF…YYYL), and 484–504 (MIVC…IIAI).

This sequence belongs to the complex I subunit 2 family. NDH is composed of at least 16 different subunits, 5 of which are encoded in the nucleus.

Its subcellular location is the plastid. The protein resides in the chloroplast thylakoid membrane. The enzyme catalyses a plastoquinone + NADH + (n+1) H(+)(in) = a plastoquinol + NAD(+) + n H(+)(out). It catalyses the reaction a plastoquinone + NADPH + (n+1) H(+)(in) = a plastoquinol + NADP(+) + n H(+)(out). NDH shuttles electrons from NAD(P)H:plastoquinone, via FMN and iron-sulfur (Fe-S) centers, to quinones in the photosynthetic chain and possibly in a chloroplast respiratory chain. The immediate electron acceptor for the enzyme in this species is believed to be plastoquinone. Couples the redox reaction to proton translocation, and thus conserves the redox energy in a proton gradient. The polypeptide is NAD(P)H-quinone oxidoreductase subunit 2 B, chloroplastic (Eucalyptus globulus subsp. globulus (Tasmanian blue gum)).